A 477-amino-acid polypeptide reads, in one-letter code: Zinc metalloproteinase/disintegrin (477 aa).

Residues 1 to 20 (MIEVLLVTICLAAFPYQGSS) form the signal peptide. Positions 21 to 187 (IILESGNVND…PIKKASQSNL (167 aa)) are excised as a propeptide. Residues 193 to 389 (RYIELFLVVD…DNPQCILNKQ (197 aa)) form the Peptidase M12B domain. Residues Glu-196 and Asp-280 each contribute to the Ca(2+) site. 3 disulfide bridges follow: Cys-304/Cys-384, Cys-344/Cys-368, and Cys-346/Cys-351. His-329 is a binding site for Zn(2+). Glu-330 is an active-site residue. 2 residues coordinate Zn(2+): His-333 and His-339. Ca(2+) contacts are provided by Cys-384 and Asn-387. Residues 390-404 (LRTDTVSTPVSGKNF) constitute a propeptide that is removed on maturation. Residues 396 to 477 (STPVSGKNFG…AGCPRNPFHA (82 aa)) form the Disintegrin domain. Disulfide bonds link Cys-410–Cys-425, Cys-412–Cys-420, Cys-419–Cys-442, Cys-433–Cys-439, Cys-438–Cys-463, and Cys-451–Cys-470. Residues 455–457 (RGD) carry the Cell attachment site motif.

It belongs to the venom metalloproteinase (M12B) family. P-II subfamily. P-IIa sub-subfamily. In terms of assembly, monomer. Zn(2+) serves as cofactor. Expressed by the venom gland.

The protein resides in the secreted. Its activity is regulated as follows. Inhibited by 1,10-phenanthroline and EDTA. In terms of biological role, impairs hemostasis in the envenomed animal. Does not exhibit detectable plasminogen activating activity. Has hemagglutinating activity on red blood cells. Cleaves insulin B chain at '38-Ala-|-Leu-39' and '40-Tyr-|-Leu-41' bonds. Functionally, this recombinant protein shows high inhibitory activity on collagen-induced platelet aggregation. In Bothrops jararaca (Jararaca), this protein is Zinc metalloproteinase/disintegrin.